Here is a 721-residue protein sequence, read N- to C-terminus: 1,4-alpha-glucan branching enzyme GlgB (721 aa).

The Nucleophile role is filled by Asp404. Glu457 (proton donor) is an active-site residue.

The protein belongs to the glycosyl hydrolase 13 family. GlgB subfamily. Monomer.

It catalyses the reaction Transfers a segment of a (1-&gt;4)-alpha-D-glucan chain to a primary hydroxy group in a similar glucan chain.. It participates in glycan biosynthesis; glycogen biosynthesis. In terms of biological role, catalyzes the formation of the alpha-1,6-glucosidic linkages in glycogen by scission of a 1,4-alpha-linked oligosaccharide from growing alpha-1,4-glucan chains and the subsequent attachment of the oligosaccharide to the alpha-1,6 position. The protein is 1,4-alpha-glucan branching enzyme GlgB of Bradyrhizobium diazoefficiens (strain JCM 10833 / BCRC 13528 / IAM 13628 / NBRC 14792 / USDA 110).